The primary structure comprises 416 residues: Lipase (416 aa).

Residues 1–28 (MKCCRIMFVLLGLWFVFGLSVPGGRTEA) form the signal peptide. Catalysis depends on serine 141, which acts as the Nucleophile. Glycine 314 provides a ligand contact to Ca(2+). The Charge relay system role is filled by aspartate 345. Ca(2+) is bound at residue aspartate 385. The active-site Charge relay system is histidine 386. 3 residues coordinate Ca(2+): glutamate 388, aspartate 393, and proline 394.

It belongs to the AB hydrolase superfamily. Homodimer.

The protein localises to the secreted. The enzyme catalyses a triacylglycerol + H2O = a diacylglycerol + a fatty acid + H(+). Activity is inhibited by zinc and iron ions, and activated in vitro in 25% v/v DMSO and acetone. Functionally, triacylglycerol hydrolase that shows hydrolysis preference towards some of the natural oils such as olive, sunflower and corn oils. In Bacillus sp, this protein is Lipase.